The primary structure comprises 65 residues: Sodium channel alpha-toxin Acra4 (65 aa).

Residues 2–63 (RDGYIVDDKN…PIKDPSYKCH (62 aa)) form the LCN-type CS-alpha/beta domain. Intrachain disulfides connect Cys12–Cys62, Cys16–Cys34, Cys20–Cys44, and Cys24–Cys46. A propeptide (removed by a carboxypeptidase) is located at residue Arg65.

Belongs to the long (4 C-C) scorpion toxin superfamily. Sodium channel inhibitor family. Alpha subfamily. Expressed by the venom gland.

It localises to the secreted. In terms of biological role, alpha toxins bind voltage-independently at site-3 of sodium channels (Nav) and inhibit the inactivation of the activated channels, thereby blocking neuronal transmission. Electrophysiological studies of this were performed using sodium-channels expressed in F11 cell culture, by patch-clamp recordings. Affinity of this toxin toward sodium channels in F11 cell line is in the order of 1 uM concentration. This chain is Sodium channel alpha-toxin Acra4, found in Androctonus crassicauda (Arabian fat-tailed scorpion).